We begin with the raw amino-acid sequence, 235 residues long: Small ribosomal subunit protein uS2c (235 aa).

The protein belongs to the universal ribosomal protein uS2 family.

Its subcellular location is the plastid. The protein resides in the chloroplast. This chain is Small ribosomal subunit protein uS2c (rps2), found in Zygnema circumcarinatum (Green alga).